We begin with the raw amino-acid sequence, 322 residues long: uncharacterized protein (322 aa).

A helical transmembrane segment spans residues 212 to 234 (VCALLVGAISVATAGAAFSIIIV).

Its subcellular location is the membrane. This is an uncharacterized protein from Rickettsia prowazekii (strain Madrid E).